A 799-amino-acid polypeptide reads, in one-letter code: ATP-dependent DNA helicase Hel308 (799 aa).

Residues Gln-29 and Ile-47–Thr-54 contribute to the ATP site. The 167-residue stretch at Glu-34–Asp-200 folds into the Helicase ATP-binding domain. The DEAH box signature appears at Asp-145–His-148. In terms of domain architecture, Helicase C-terminal spans Gln-234–Ala-435. Disordered regions lie at residues Arg-522–Pro-566 and Asn-750–Phe-799. Acidic residues predominate over residues Leu-553–Pro-566.

It belongs to the helicase family. Hel308 subfamily. In terms of assembly, monomer.

The catalysed reaction is Couples ATP hydrolysis with the unwinding of duplex DNA by translocating in the 3'-5' direction.. It carries out the reaction ATP + H2O = ADP + phosphate + H(+). Its function is as follows. DNA-dependent ATPase and 3'-5' DNA helicase that may be involved in repair of stalled replication forks. This chain is ATP-dependent DNA helicase Hel308, found in Haloarcula marismortui (strain ATCC 43049 / DSM 3752 / JCM 8966 / VKM B-1809) (Halobacterium marismortui).